A 318-amino-acid chain; its full sequence is Acetyl-coenzyme A carboxylase carboxyl transferase subunit alpha (318 aa).

Residues 34–295 (DIEDQISQLR…KQAIKKDLSE (262 aa)) enclose the CoA carboxyltransferase C-terminal domain.

It belongs to the AccA family. In terms of assembly, acetyl-CoA carboxylase is a heterohexamer composed of biotin carboxyl carrier protein (AccB), biotin carboxylase (AccC) and two subunits each of ACCase subunit alpha (AccA) and ACCase subunit beta (AccD).

The protein localises to the cytoplasm. It carries out the reaction N(6)-carboxybiotinyl-L-lysyl-[protein] + acetyl-CoA = N(6)-biotinyl-L-lysyl-[protein] + malonyl-CoA. It participates in lipid metabolism; malonyl-CoA biosynthesis; malonyl-CoA from acetyl-CoA: step 1/1. Its function is as follows. Component of the acetyl coenzyme A carboxylase (ACC) complex. First, biotin carboxylase catalyzes the carboxylation of biotin on its carrier protein (BCCP) and then the CO(2) group is transferred by the carboxyltransferase to acetyl-CoA to form malonyl-CoA. This is Acetyl-coenzyme A carboxylase carboxyl transferase subunit alpha from Colwellia psychrerythraea (strain 34H / ATCC BAA-681) (Vibrio psychroerythus).